The primary structure comprises 72 residues: Putative membrane protein insertion efficiency factor (72 aa).

Belongs to the UPF0161 family.

The protein localises to the cell inner membrane. Its function is as follows. Could be involved in insertion of integral membrane proteins into the membrane. The chain is Putative membrane protein insertion efficiency factor from Myxococcus xanthus (strain DK1622).